The following is a 115-amino-acid chain: Nitrogenase-stabilizing/protective protein NifW (115 aa).

It belongs to the NifW family. Homotrimer; associates with NifD.

Its function is as follows. May protect the nitrogenase Fe-Mo protein from oxidative damage. This is Nitrogenase-stabilizing/protective protein NifW from Methylobacterium sp. (strain 4-46).